A 156-amino-acid polypeptide reads, in one-letter code: Small ribosomal subunit protein uS7 (156 aa).

This sequence belongs to the universal ribosomal protein uS7 family. In terms of assembly, part of the 30S ribosomal subunit. Contacts proteins S9 and S11.

Functionally, one of the primary rRNA binding proteins, it binds directly to 16S rRNA where it nucleates assembly of the head domain of the 30S subunit. Is located at the subunit interface close to the decoding center, probably blocks exit of the E-site tRNA. The polypeptide is Small ribosomal subunit protein uS7 (Anaeromyxobacter dehalogenans (strain 2CP-C)).